Reading from the N-terminus, the 350-residue chain is MFIDSVKITLASGDGGKGAVSFRREKHVPLGGPDGGDGGNGGDIIFVCDNNTHTLVNFKGKRELRAQNGAGGMGRNKNGKKGENLELIVPEGTQVIDAQTNEILLDLTKEGQRELFLKGGKGGLGNTHFKHATNQRPDYAQPGIKGESRLVRLELKLIADVGLVGFPNVGKSTLISVVSNAKPEIANYEFTTLTPKLGLVDVNEYNSFVMADIPGIIEGASGGKGLGLAFLKHIERTSFLLFVLDPMRQMPLKEQFIVLRKELEKFSNELFGRKFGIMISKSDSVRLGEEFAEQIALNINELDNYLKEINNPQSFLIKVSSLEKTGLKELKFMLLEEIKTLRNNKKNLTI.

Residues 1–158 (MFIDSVKITL…RLVRLELKLI (158 aa)) form the Obg domain. In terms of domain architecture, OBG-type G spans 159 to 339 (ADVGLVGFPN…LKFMLLEEIK (181 aa)). GTP contacts are provided by residues 165 to 172 (GFPNVGKS), 190 to 194 (FTTLT), 212 to 215 (DIPG), 280 to 283 (SKSD), and 320 to 322 (SSL). Residues Ser172 and Thr192 each contribute to the Mg(2+) site.

The protein belongs to the TRAFAC class OBG-HflX-like GTPase superfamily. OBG GTPase family. Monomer. Mg(2+) serves as cofactor.

The protein localises to the cytoplasm. Functionally, an essential GTPase which binds GTP, GDP and possibly (p)ppGpp with moderate affinity, with high nucleotide exchange rates and a fairly low GTP hydrolysis rate. Plays a role in control of the cell cycle, stress response, ribosome biogenesis and in those bacteria that undergo differentiation, in morphogenesis control. This chain is GTPase Obg, found in Campylobacter jejuni subsp. jejuni serotype O:2 (strain ATCC 700819 / NCTC 11168).